We begin with the raw amino-acid sequence, 122 residues long: LYR motif-containing protein 1 (122 aa).

This sequence belongs to the complex I LYR family.

May promote cell proliferation and inhibition of apoptosis of preadipocytes. The protein is LYR motif-containing protein 1 (Lyrm1) of Mus musculus (Mouse).